The primary structure comprises 418 residues: D-amino acid dehydrogenase (418 aa).

Residue 3–17 (VLVLGAGVAGVSSAW) participates in FAD binding.

It belongs to the DadA oxidoreductase family. FAD is required as a cofactor.

It carries out the reaction a D-alpha-amino acid + A + H2O = a 2-oxocarboxylate + AH2 + NH4(+). In terms of biological role, oxidative deamination of D-amino acids. This is D-amino acid dehydrogenase from Neisseria meningitidis serogroup A / serotype 4A (strain DSM 15465 / Z2491).